The primary structure comprises 103 residues: Sec-independent protein translocase protein TatA (103 aa).

A helical transmembrane segment spans residues 1 to 21 (MGNIFSPTHLIVILLIIIVLF). The segment at 77 to 103 (KRATTRVKGSSSSRKGKTSVVKKQRVK) is disordered. Basic residues predominate over residues 90-103 (RKGKTSVVKKQRVK).

This sequence belongs to the TatA/E family. As to quaternary structure, the Tat system comprises two distinct complexes: a TatABC complex, containing multiple copies of TatA, TatB and TatC subunits, and a separate TatA complex, containing only TatA subunits. Substrates initially bind to the TatABC complex, which probably triggers association of the separate TatA complex to form the active translocon.

It localises to the cell inner membrane. Part of the twin-arginine translocation (Tat) system that transports large folded proteins containing a characteristic twin-arginine motif in their signal peptide across membranes. TatA could form the protein-conducting channel of the Tat system. This chain is Sec-independent protein translocase protein TatA, found in Bartonella henselae (strain ATCC 49882 / DSM 28221 / CCUG 30454 / Houston 1) (Rochalimaea henselae).